Reading from the N-terminus, the 80-residue chain is Conotoxin SIVB (80 aa).

The signal sequence occupies residues 1-21; the sequence is MGMRMMFTVFLSVVLATTVVS. Positions 22 to 38 are excised as a propeptide; the sequence is TPSDRASDGRNAAVHER. Gln39 is modified (pyrrolidone carboxylic acid). Ser45 carries O-linked (HexNAc...) serine glycosylation. 6 positions are modified to 4-hydroxyproline: Pro55, Pro60, Pro61, Pro69, Pro72, and Pro75. Pro75 is modified (proline amide). Positions 76–80 are excised as a propeptide; that stretch reads GRRND.

This sequence belongs to the conotoxin A superfamily. Contains 3 disulfide bonds. In terms of processing, O-linked glycan consists of Hex3-HexNAc2 pentasaccharide. Expressed by the venom duct.

It localises to the secreted. Functionally, neurotoxin with probable activity on sodium channel. Induces intense repetitive firing of the frog neuromuscular junction, leading to a tetanic contracture in muscle fiber (spastic paralysis). In vivo, shows the same effect as the whole venom when injected on fish prey. The chain is Conotoxin SIVB from Conus striatus (Striated cone).